A 201-amino-acid chain; its full sequence is NAD(P)H dehydrogenase (quinone) (201 aa).

A Flavodoxin-like domain is found at 4–192 (VLVLYYSSYG…TIARFQGQHI (189 aa)). FMN contacts are provided by residues 10–15 (SSYGHV) and 80–82 (TRF). Tyr-12 serves as a coordination point for NAD(+). Substrate is bound at residue Trp-100. Residues 115 to 121 (STASQHG) and His-136 contribute to the FMN site.

This sequence belongs to the WrbA family. Requires FMN as cofactor.

The enzyme catalyses a quinone + NADH + H(+) = a quinol + NAD(+). It catalyses the reaction a quinone + NADPH + H(+) = a quinol + NADP(+). This is NAD(P)H dehydrogenase (quinone) from Chromohalobacter salexigens (strain ATCC BAA-138 / DSM 3043 / CIP 106854 / NCIMB 13768 / 1H11).